A 166-amino-acid chain; its full sequence is MNIQEIKDLMAQFDTSSLREFLFKTNEGELIFSKNEQHLNASISNQEHAVPVPQVQLVPNSTASEASSPASVKDVPVEEQPQAESFVAEGDIVESPLVGVAYLAASPDKPPFVAVGDTVKKGQTLVIIEAMKVMNEVPAPCDGVITEILVSNEDVIEFGQGLVRIK.

The span at 61–70 (STASEASSPA) shows a compositional bias: polar residues. Positions 61 to 82 (STASEASSPASVKDVPVEEQPQ) are disordered. In terms of domain architecture, Biotinyl-binding spans 90 to 166 (GDIVESPLVG…EFGQGLVRIK (77 aa)). Lys-132 is subject to N6-biotinyllysine.

Homodimer.

It participates in lipid metabolism; fatty acid biosynthesis. Its function is as follows. This protein is a component of the acetyl coenzyme A carboxylase complex; first, biotin carboxylase catalyzes the carboxylation of the carrier protein and then the transcarboxylase transfers the carboxyl group to form malonyl-CoA. The chain is Biotin carboxyl carrier protein of acetyl-CoA carboxylase from Streptococcus pyogenes serotype M6 (strain ATCC BAA-946 / MGAS10394).